A 447-amino-acid chain; its full sequence is D-ribitol-5-phosphate cytidylyltransferase (447 aa).

It belongs to the IspD/TarI cytidylyltransferase family. IspD subfamily. Homodimer.

It is found in the cytoplasm. Its subcellular location is the cytosol. The enzyme catalyses D-ribitol 5-phosphate + CTP + H(+) = CDP-L-ribitol + diphosphate. The catalysed reaction is D-ribose 5-phosphate + CTP + H(+) = CDP-D-ribose + diphosphate. It catalyses the reaction D-ribulose 5-phosphate + CTP + H(+) = CDP-D-ribulose + diphosphate. Its pathway is protein modification; protein glycosylation. Its function is as follows. Cytidylyltransferase required for protein O-linked mannosylation. Catalyzes the formation of CDP-ribitol nucleotide sugar from D-ribitol 5-phosphate. CDP-ribitol is a substrate of FKTN during the biosynthesis of the phosphorylated O-mannosyl trisaccharide (N-acetylgalactosamine-beta-3-N-acetylglucosamine-beta-4-(phosphate-6-)mannose), a carbohydrate structure present in alpha-dystroglycan (DAG1), which is required for binding laminin G-like domain-containing extracellular proteins with high affinity. Shows activity toward other pentose phosphate sugars and mediates formation of CDP-ribulose or CDP-ribose using CTP and ribulose-5-phosphate or ribose-5-phosphate, respectively. Not involved in dolichol production. This Mus musculus (Mouse) protein is D-ribitol-5-phosphate cytidylyltransferase (Crppa).